A 192-amino-acid polypeptide reads, in one-letter code: UPF0312 protein PC1_2518 (192 aa).

An N-terminal signal peptide occupies residues 1–23 (MLKKTLLSLTAVSMLASAGSALA).

Belongs to the UPF0312 family. Type 1 subfamily.

It is found in the periplasm. The sequence is that of UPF0312 protein PC1_2518 from Pectobacterium carotovorum subsp. carotovorum (strain PC1).